A 322-amino-acid chain; its full sequence is CRISPR-associated protein Cas1 1 (322 aa).

Residues Glu-149, His-214, and Glu-229 each coordinate Mn(2+).

It belongs to the CRISPR-associated endonuclease Cas1 family. In terms of assembly, homodimer, forms a heterotetramer with a Cas2 homodimer. Requires Mg(2+) as cofactor. Mn(2+) is required as a cofactor.

Its function is as follows. CRISPR (clustered regularly interspaced short palindromic repeat), is an adaptive immune system that provides protection against mobile genetic elements (viruses, transposable elements and conjugative plasmids). CRISPR clusters contain spacers, sequences complementary to antecedent mobile elements, and target invading nucleic acids. CRISPR clusters are transcribed and processed into CRISPR RNA (crRNA). Acts as a dsDNA endonuclease. Involved in the integration of spacer DNA into the CRISPR cassette. This is CRISPR-associated protein Cas1 1 from Methanobrevibacter ruminantium (strain ATCC 35063 / DSM 1093 / JCM 13430 / OCM 146 / M1) (Methanobacterium ruminantium).